The sequence spans 347 residues: Quinolinate synthase (347 aa).

Iminosuccinate-binding residues include His-47 and Ser-68. Cys-113 contributes to the [4Fe-4S] cluster binding site. Residues 139–141 and Ser-156 each bind iminosuccinate; that span reads YAN. Position 200 (Cys-200) interacts with [4Fe-4S] cluster. Residues 226 to 228 and Thr-243 each bind iminosuccinate; that span reads HPE. Cys-297 contacts [4Fe-4S] cluster.

The protein belongs to the quinolinate synthase family. Type 1 subfamily. It depends on [4Fe-4S] cluster as a cofactor.

Its subcellular location is the cytoplasm. The enzyme catalyses iminosuccinate + dihydroxyacetone phosphate = quinolinate + phosphate + 2 H2O + H(+). It participates in cofactor biosynthesis; NAD(+) biosynthesis; quinolinate from iminoaspartate: step 1/1. In terms of biological role, catalyzes the condensation of iminoaspartate with dihydroxyacetone phosphate to form quinolinate. The polypeptide is Quinolinate synthase (Escherichia coli (strain K12 / MC4100 / BW2952)).